We begin with the raw amino-acid sequence, 96 residues long: Guanine nucleotide-binding protein alpha-9 subunit (96 aa).

One can recognise a G-alpha domain in the interval 2–96 (YFHSTAIILF…ISASLKMVGV (95 aa)). Residues 9 to 16 (ILFLNKID) form a G1 motif region. Residues 13 to 16 (NKID) and alanine 69 contribute to the GTP site. Positions 67-72 (TSATDT) are G2 motif.

The protein belongs to the G-alpha family. In terms of assembly, g proteins are composed of 3 units; alpha, beta and gamma. The alpha chain contains the guanine nucleotide binding site. In terms of tissue distribution, expressed in ASJ neurons.

Functionally, guanine nucleotide-binding proteins (G proteins) are involved as modulators or transducers in various transmembrane signaling systems. Plays a role in innate immunity and maintaining survival in response to metabolites of E.coli. This might be by regulating the expression and signaling of genes such as lys-8, ins-7 and daf-28. Has a role in lifespan to promote longevity. The polypeptide is Guanine nucleotide-binding protein alpha-9 subunit (Caenorhabditis elegans).